Consider the following 164-residue polypeptide: Cyclic pyranopterin monophosphate synthase (164 aa).

Residues 77-79 (LCH) and 115-116 (ME) contribute to the substrate site. D130 is an active-site residue.

The protein belongs to the MoaC family. Homohexamer; trimer of dimers.

It catalyses the reaction (8S)-3',8-cyclo-7,8-dihydroguanosine 5'-triphosphate = cyclic pyranopterin phosphate + diphosphate. It functions in the pathway cofactor biosynthesis; molybdopterin biosynthesis. In terms of biological role, catalyzes the conversion of (8S)-3',8-cyclo-7,8-dihydroguanosine 5'-triphosphate to cyclic pyranopterin monophosphate (cPMP). In Rhizobium meliloti (strain 1021) (Ensifer meliloti), this protein is Cyclic pyranopterin monophosphate synthase.